A 173-amino-acid polypeptide reads, in one-letter code: SPbeta prophage-derived putative HNH homing endonuclease YosQ (173 aa).

Its function is as follows. A possible homing endonuclease, it is entirely encoded within the YosP intron. The polypeptide is SPbeta prophage-derived putative HNH homing endonuclease YosQ (yosQ) (Bacillus subtilis (strain 168)).